The primary structure comprises 257 residues: DNA repair protein RecO (257 aa).

It belongs to the RecO family.

Involved in DNA repair and RecF pathway recombination. The sequence is that of DNA repair protein RecO from Streptococcus thermophilus (strain CNRZ 1066).